Here is a 149-residue protein sequence, read N- to C-terminus: Large ribosomal subunit protein uL11 (149 aa).

Belongs to the universal ribosomal protein uL11 family. Part of the ribosomal stalk of the 50S ribosomal subunit. Interacts with L10 and the large rRNA to form the base of the stalk. L10 forms an elongated spine to which L12 dimers bind in a sequential fashion forming a multimeric L10(L12)X complex. One or more lysine residues are methylated.

Forms part of the ribosomal stalk which helps the ribosome interact with GTP-bound translation factors. The polypeptide is Large ribosomal subunit protein uL11 (Methylorubrum extorquens (strain CM4 / NCIMB 13688) (Methylobacterium extorquens)).